A 598-amino-acid chain; its full sequence is Membrane protein insertase YidC (598 aa).

The chain crosses the membrane as a helical span at residues 7-27 (NYFIAIALSVLIVLGWQFLYM). The segment at 37–71 (AQEAQKAQQQTEQVQQPAAGGATPAPASGTAPSGQ) is disordered. A compositionally biased stretch (low complexity) spans 40-71 (AQKAQQQTEQVQQPAAGGATPAPASGTAPSGQ). 4 consecutive transmembrane segments (helical) span residues 373 to 393 (FFGN…ALFF), 447 to 467 (WPVA…YITI), 492 to 512 (LFGL…WPLI), and 538 to 558 (WMPL…VIYW).

It belongs to the OXA1/ALB3/YidC family. Type 1 subfamily. As to quaternary structure, interacts with the Sec translocase complex via SecD. Specifically interacts with transmembrane segments of nascent integral membrane proteins during membrane integration.

The protein localises to the cell inner membrane. Required for the insertion and/or proper folding and/or complex formation of integral membrane proteins into the membrane. Involved in integration of membrane proteins that insert both dependently and independently of the Sec translocase complex, as well as at least some lipoproteins. Aids folding of multispanning membrane proteins. The polypeptide is Membrane protein insertase YidC (Rhizobium etli (strain CIAT 652)).